The following is a 542-amino-acid chain: GMP synthase [glutamine-hydrolyzing] (542 aa).

The Glutamine amidotransferase type-1 domain occupies 28-218 (MIVILDFGSQ…VYHICECEPT (191 aa)). Cysteine 105 serves as the catalytic Nucleophile. Active-site residues include histidine 192 and glutamate 194. The GMPS ATP-PPase domain occupies 219–417 (WTTEAFVDET…IGLPEEIVRR (199 aa)). ATP is bound at residue 246-252 (SGGVDSS).

In terms of assembly, homodimer.

The enzyme catalyses XMP + L-glutamine + ATP + H2O = GMP + L-glutamate + AMP + diphosphate + 2 H(+). Its pathway is purine metabolism; GMP biosynthesis; GMP from XMP (L-Gln route): step 1/1. Its function is as follows. Catalyzes the synthesis of GMP from XMP. In Crocosphaera subtropica (strain ATCC 51142 / BH68) (Cyanothece sp. (strain ATCC 51142)), this protein is GMP synthase [glutamine-hydrolyzing].